The sequence spans 402 residues: Exodeoxyribonuclease 7 large subunit (402 aa).

The protein belongs to the XseA family. As to quaternary structure, heterooligomer composed of large and small subunits.

It is found in the cytoplasm. It catalyses the reaction Exonucleolytic cleavage in either 5'- to 3'- or 3'- to 5'-direction to yield nucleoside 5'-phosphates.. In terms of biological role, bidirectionally degrades single-stranded DNA into large acid-insoluble oligonucleotides, which are then degraded further into small acid-soluble oligonucleotides. The chain is Exodeoxyribonuclease 7 large subunit from Moorella thermoacetica (strain ATCC 39073 / JCM 9320).